We begin with the raw amino-acid sequence, 227 residues long: 7-cyano-7-deazaguanine synthase (227 aa).

Position 7–17 (valine 7–threonine 17) interacts with ATP. Zn(2+)-binding residues include cysteine 187, cysteine 195, cysteine 198, and cysteine 201.

It belongs to the QueC family. The cofactor is Zn(2+).

The enzyme catalyses 7-carboxy-7-deazaguanine + NH4(+) + ATP = 7-cyano-7-deazaguanine + ADP + phosphate + H2O + H(+). It participates in purine metabolism; 7-cyano-7-deazaguanine biosynthesis. Functionally, catalyzes the ATP-dependent conversion of 7-carboxy-7-deazaguanine (CDG) to 7-cyano-7-deazaguanine (preQ(0)). The polypeptide is 7-cyano-7-deazaguanine synthase (Chlorobaculum tepidum (strain ATCC 49652 / DSM 12025 / NBRC 103806 / TLS) (Chlorobium tepidum)).